The chain runs to 277 residues: MNGEYKTLANKSFESNVLFFGQEACLPNYTYKGNNVRDSYVIHYIQEGKGTFAAANHPATVLKAGDIFILPKGTPCFYQADNDQPWKYFWIGFSAGIRIEAMLSGSLLAQKCYLRQVQNGHIYADLSELYKVLHIPNSLINDVLLGSLIYRLFYDLLRWYPADATNIKVKSTEQFNLAVSYLQENYSTGCTIMDLCHYLNLSRSYLYTLFKTHANTSPQKLLTKLRLEDAKQRLSTSNNSVQSIANMVGYKDSFTFSKAFKRYSGASPSYYRKSIGI.

In terms of domain architecture, HTH araC/xylS-type spans 176–274 (NLAVSYLQEN…GASPSYYRKS (99 aa)). 2 consecutive DNA-binding regions (H-T-H motif) follow at residues 193 to 214 (MDLC…KTHA) and 241 to 264 (VQSI…KRYS).

Functionally, involved in the regulation of the raffinose-operon. In Pediococcus pentosaceus, this protein is Raffinose operon transcriptional regulatory protein RafR (rafR).